Consider the following 146-residue polypeptide: D-aminoacyl-tRNA deacylase (146 aa).

Positions 137-138 (GP) match the Gly-cisPro motif, important for rejection of L-amino acids motif.

Belongs to the DTD family. In terms of assembly, homodimer.

The protein localises to the cytoplasm. It carries out the reaction glycyl-tRNA(Ala) + H2O = tRNA(Ala) + glycine + H(+). The enzyme catalyses a D-aminoacyl-tRNA + H2O = a tRNA + a D-alpha-amino acid + H(+). An aminoacyl-tRNA editing enzyme that deacylates mischarged D-aminoacyl-tRNAs. Also deacylates mischarged glycyl-tRNA(Ala), protecting cells against glycine mischarging by AlaRS. Acts via tRNA-based rather than protein-based catalysis; rejects L-amino acids rather than detecting D-amino acids in the active site. By recycling D-aminoacyl-tRNA to D-amino acids and free tRNA molecules, this enzyme counteracts the toxicity associated with the formation of D-aminoacyl-tRNA entities in vivo and helps enforce protein L-homochirality. The chain is D-aminoacyl-tRNA deacylase from Bacillus cereus (strain G9842).